A 70-amino-acid polypeptide reads, in one-letter code: Large ribosomal subunit protein uL29 (70 aa).

This sequence belongs to the universal ribosomal protein uL29 family.

The chain is Large ribosomal subunit protein uL29 from Prochlorococcus marinus (strain MIT 9303).